The chain runs to 788 residues: Mediator of RNA polymerase II transcription subunit 15 (788 aa).

The interval 9-73 is interaction with SREBF1; that stretch reads DWRSTAFRQK…IHFRDIHNKK (65 aa). Disordered regions lie at residues 95-139 and 260-329; these read GAAG…MAPH and QQQA…PLVS. Gly residues predominate over residues 108 to 117; sequence QSLGGMGSLG. Positions 260 to 269 are enriched in low complexity; the sequence is QQQALQAQPP. A compositionally biased stretch (pro residues) spans 270-284; the sequence is IQQPPMQQPQPPPSQ. Composition is skewed to low complexity over residues 285–294 and 309–329; these read ALPQQLQQMH and PVAQ…PLVS. Arg349 carries the asymmetric dimethylarginine modification. The tract at residues 412–530 is disordered; the sequence is SSSIPLGRQP…PAGSSQAEEQ (119 aa). Over residues 426-446 the composition is skewed to low complexity; sequence SQSSLPMLSSPSPGQQVQTPQ. Pro residues predominate over residues 447–459; sequence SMPPPPQPSPQPG. Residues 460–482 show a composition bias toward low complexity; that stretch reads QPSSQPNSNVSSGPAPSPSSFLP. Polar residues-rich tracts occupy residues 493 to 503 and 511 to 529; these read VTARTPQNFSV and TPVN…QAEE. The Nuclear localization signal motif lies at 547-564; that stretch reads RRMINKIDKNEDRKKDLS. Position 603 is a phosphothreonine (Thr603).

The protein belongs to the Mediator complex subunit 15 family. Component of the Mediator complex, which is composed of MED1, MED4, MED6, MED7, MED8, MED9, MED10, MED11, MED12, MED13, MED13L, MED14, MED15, MED16, MED17, MED18, MED19, MED20, MED21, MED22, MED23, MED24, MED25, MED26, MED27, MED29, MED30, MED31, CCNC, CDK8 and CDC2L6/CDK11. The MED12, MED13, CCNC and CDK8 subunits form a distinct module termed the CDK8 module. Mediator containing the CDK8 module is less active than Mediator lacking this module in supporting transcriptional activation. Individual preparations of the Mediator complex lacking one or more distinct subunits have been variously termed ARC, CRSP, DRIP, PC2, SMCC and TRAP. Interacts with SMAD2, SMAD3, SREBF1 and SREBF2. Interacts with WWTR1. Interacts with TRIM11. Ubiquitinated by TRIM11, leading to proteasomal degradation. As to expression, expressed in all tissues examined, including heart, brain, lung, spleen, thymus, pancreas, blood leukocyte and placenta. However, the level of expression varied, with highest expression in the placenta and peripheral blood and lowest in the pancreas and kidney.

It localises to the cytoplasm. The protein resides in the nucleus. Its function is as follows. Component of the Mediator complex, a coactivator involved in the regulated transcription of nearly all RNA polymerase II-dependent genes. Mediator functions as a bridge to convey information from gene-specific regulatory proteins to the basal RNA polymerase II transcription machinery. Mediator is recruited to promoters by direct interactions with regulatory proteins and serves as a scaffold for the assembly of a functional preinitiation complex with RNA polymerase II and the general transcription factors. Required for cholesterol-dependent gene regulation. Positively regulates the Nodal signaling pathway. The sequence is that of Mediator of RNA polymerase II transcription subunit 15 (MED15) from Homo sapiens (Human).